The following is a 157-amino-acid chain: Small heat shock protein ibp (157 aa).

The sHSP domain occupies 35–148; that stretch reads EKPISDTPTY…KPKKISINVP (114 aa).

The protein belongs to the small heat shock protein (HSP20) family.

This is Small heat shock protein ibp (ibp) from Buchnera aphidicola subsp. Acyrthosiphon pisum (strain APS) (Acyrthosiphon pisum symbiotic bacterium).